The primary structure comprises 424 residues: Serine incorporator 5 (424 aa).

Residues 1-6 (MYALYF) are Extracellular-facing. Residues 7–23 (ILVVVLCCIMMSTTVAH) form a helical membrane-spanning segment. At 24 to 52 (KMKEHIPFFEDMCKGIKAGDTCEKLVGYS) the chain is on the cytoplasmic side. The chain crosses the membrane as a helical span at residues 53–73 (AVYRVCFGMACFFFIFCLLTL). Residues 74–87 (KINNSKSCRAHIHN) lie on the Extracellular side of the membrane. A glycan (N-linked (GlcNAc...) asparagine) is linked at Asn-76. The helical transmembrane segment at 88-108 (GFWFFKLLLLGAMCSGAFFIP) threads the bilayer. The Cytoplasmic segment spans residues 109–119 (DQDTFLNAWRY). The helical transmembrane segment at 120-140 (VGAVGGFLFIGIQLLLLVEFA) threads the bilayer. The Extracellular portion of the chain corresponds to 141-161 (HKWNKNWTAGTASNKLWYASL). Asn-146 carries N-linked (GlcNAc...) asparagine glycosylation. The chain crosses the membrane as a helical span at residues 162 to 182 (ALVTLIMYSIATGGLVLMAVF). Residues 183–193 (YTQKDGCMENK) are Cytoplasmic-facing. Residues 194-214 (ILLGVNGGLCVLISLVAISPC) traverse the membrane as a helical segment. At 215–221 (VQNRQPH) the chain is on the extracellular side. Residues 222 to 242 (SGLLQSGVISCYVTYLTFSAL) form a helical membrane-spanning segment. The Cytoplasmic segment spans residues 243–274 (SSKPAEVVLDEHGKNVTICVPDFGQDLYRDEN). The chain crosses the membrane as a helical span at residues 275–295 (LVTILGTSLLIGCILYSCLTS). At 296 to 348 (TTRSSSDALQGRYAAPELEIARCCFCFSPGGEDTEEQQQGKEGPRVIYDEKKG) the chain is on the extracellular side. The helical transmembrane segment at 349–369 (TVYIYSYFHFVFFLASLYVMM) threads the bilayer. At 370-391 (TVTNWFNYESANIESFFSGSWS) the chain is on the cytoplasmic side. Residues 392 to 412 (IFWVKMASCWICVLLYLCTLV) form a helical membrane-spanning segment. At 413–424 (APLCCPTREFSV) the chain is on the extracellular side.

This sequence belongs to the TDE1 family.

It is found in the cell membrane. The enzyme catalyses a 1,2-diacyl-sn-glycero-3-phospho-L-serine(in) = a 1,2-diacyl-sn-glycero-3-phospho-L-serine(out). It catalyses the reaction a 1,2-diacyl-sn-glycero-3-phosphocholine(in) = a 1,2-diacyl-sn-glycero-3-phosphocholine(out). It carries out the reaction a 1,2-diacyl-sn-glycero-3-phosphoethanolamine(in) = a 1,2-diacyl-sn-glycero-3-phosphoethanolamine(out). Restriction factor required to restrict infectivity of gammaretroviruses: acts by inhibiting an early step of viral infection. Impairs the penetration of the viral particle into the cytoplasm. Non-ATP-dependent, non-specific lipid transporter for phosphatidylserine, phosphatidylcholine, and phosphatidylethanolamine. Functions as a scramblase that flips lipids in both directions across the membrane. Phospholipid scrambling results in gammaretroviral surface exposure of phosphatidylserine and loss of membrane asymmetry, which leads to loss of infectivity. Enhances the incorporation of serine into phosphatidylserine and sphingolipids. May play a role in providing serine molecules for the formation of myelin glycosphingolipids in oligodendrocytes. This Macaca fascicularis (Crab-eating macaque) protein is Serine incorporator 5 (SERINC5).